We begin with the raw amino-acid sequence, 215 residues long: Cytochrome b6 (215 aa).

Residues 32 to 52 (IFYCLGGVTLVCFIIQFATGF) form a helical membrane-spanning segment. C35 contributes to the heme c binding site. Heme b-binding residues include H86 and H100. The next 3 membrane-spanning stretches (helical) occupy residues 90–110 (ASMMVLMMILHVFRVYLTGGF), 116–136 (LTWITGVVLAVITVTFGVTGY), and 186–206 (LHTFVLPWLIAVFMLLHFLMI). Heme b contacts are provided by H187 and H202.

This sequence belongs to the cytochrome b family. PetB subfamily. As to quaternary structure, the 4 large subunits of the cytochrome b6-f complex are cytochrome b6, subunit IV (17 kDa polypeptide, PetD), cytochrome f and the Rieske protein, while the 4 small subunits are PetG, PetL, PetM and PetN. The complex functions as a dimer. It depends on heme b as a cofactor. Heme c serves as cofactor.

The protein resides in the cellular thylakoid membrane. Its function is as follows. Component of the cytochrome b6-f complex, which mediates electron transfer between photosystem II (PSII) and photosystem I (PSI), cyclic electron flow around PSI, and state transitions. This Acaryochloris marina (strain MBIC 11017) protein is Cytochrome b6.